Here is a 201-residue protein sequence, read N- to C-terminus: Protein FAR-RED-ELONGATED HYPOCOTYL 1-LIKE (201 aa).

Residues 32–35 (KKRK) carry the Nuclear localization sequence (NLS) motif. The short motif at 43 to 46 (LLPL) is the Nuclear export sequence (NES) element.

Belongs to the FHY1 protein family. Homodimer and heterodimer with FHY1. Interacts with PHYA, especially upon far-red (FR) light illumination. Binds to LAF1 and HFR1. In terms of processing, inactivated by rapid reversible PHYA-mediated phosphorylation.

Its subcellular location is the nucleus. The protein resides in the cytoplasm. Its function is as follows. Can activate transcription. Essential for light-regulated PHYA nuclear accumulation and subsequent PHYA phototropic signaling processes. PHYA-specific signal transducer in response to continuous FR lights. Mediates the association of PHYA with HFR1 and LAF1 in the nucleus in response to FR conditions. Contributes to inhibition of hypocotyl elongation in continuous blue light (B). This is Protein FAR-RED-ELONGATED HYPOCOTYL 1-LIKE from Arabidopsis thaliana (Mouse-ear cress).